The chain runs to 99 residues: Protein NCBP2AS2 (99 aa).

Positions 76–99 (ELRRGLRGRSGPPPGSQRGPGANI) are disordered.

This is Protein NCBP2AS2 from Homo sapiens (Human).